A 60-amino-acid chain; its full sequence is UPF0337 protein SAV1625 (60 aa).

Residues 18–41 (VGNVTDNKELEKEGQQDKATGKAK) form a disordered region. Positions 23-41 (DNKELEKEGQQDKATGKAK) are enriched in basic and acidic residues.

The protein belongs to the UPF0337 (CsbD) family.

The protein is UPF0337 protein SAV1625 of Staphylococcus aureus (strain Mu50 / ATCC 700699).